Here is a 1008-residue protein sequence, read N- to C-terminus: Histone deacetylase complex subunit SAP130-A (1008 aa).

The span at 1 to 31 (MNSQQFPRQAASMPSPQVSNSGASVGQNVQG) shows a compositional bias: polar residues. Disordered stretches follow at residues 1 to 44 (MNSQ…DVQS), 113 to 134 (SKST…SAVP), 415 to 435 (IQSD…HRAS), and 617 to 720 (TPGG…PATI). Over residues 35 to 44 (EVARDMDVQS) the composition is skewed to basic and acidic residues. The segment covering 618 to 644 (PGGTTVMQSHSQSPGIGSSPAQGSSPR) has biased composition (polar residues). Residues 678–697 (ADQPSAAASLPSSHHPAAAV) show a composition bias toward low complexity.

This sequence belongs to the SAP130 family.

It localises to the nucleus. Acts as a transcriptional repressor. The polypeptide is Histone deacetylase complex subunit SAP130-A (sap130-a) (Xenopus laevis (African clawed frog)).